Consider the following 1587-residue polypeptide: NHS-like protein 1 (1587 aa).

S24 is subject to Phosphoserine. Disordered regions lie at residues 140-163 and 176-202; these read FAAGSSPCDDYQDEDTEADRKCSL and RPKTPTSGDFSDLHTQTNWTKSLPLPT. The span at 179–196 shows a compositional bias: polar residues; sequence TPTSGDFSDLHTQTNWTK. Phosphoserine is present on residues S197 and S328. Over residues 431-446 the composition is skewed to polar residues; sequence SAGQLDSRTPGSSSYS. 2 disordered regions span residues 431–470 and 549–584; these read SAGQLDSRTPGSSSYSKIKPRDRPTPRCSVKDDHQSPRHH and SEPWEYKTSSNGRASPLKPHLATPGCSTPTSNVSSC. Residues 449–470 show a composition bias toward basic and acidic residues; that stretch reads KPRDRPTPRCSVKDDHQSPRHH. The residue at position 563 (S563) is a Phosphoserine. Polar residues predominate over residues 573–584; it reads GCSTPTSNVSSC. S629 is modified (phosphoserine). Disordered stretches follow at residues 661 to 687, 705 to 767, and 789 to 1059; these read KAKKPPLPPSRTDSLRRIPKKNNQTNG, SLPG…SSVK, and NPTG…RPPM. The span at 705-720 shows a compositional bias: low complexity; that stretch reads SLPGKGGSSPSQSPCS. Polar residues-rich tracts occupy residues 730–750, 757–767, 792–801, and 838–855; these read SRSQSIVSEGSSLTSTTTPNV, TPSQSDTSSVK, GGCSANTEAA, and RVTSPSSGYSSQSNTPTA. Low complexity predominate over residues 885-911; that stretch reads SLISSMSISSSSTSLSSNTSTEGSGTM. Composition is skewed to pro residues over residues 923–934, 958–972, and 998–1021; these read APPPPPLPPLPS, PLPPSPMFPPPPPEA, and SLPPVPAPPPFLPSSEPPPAPPLD. Over residues 1040 to 1055 the composition is skewed to basic and acidic residues; the sequence is SSREALRRPANKEEGC. S1079 carries the post-translational modification Phosphoserine. Disordered stretches follow at residues 1083 to 1534 and 1565 to 1587; these read AVLF…ARRA and VDGIGRAEGNGPSEQCGGTEQKS. Polar residues-rich tracts occupy residues 1089–1099 and 1112–1141; these read PSAQEQRTPTA and SRNSINEMESESQAASVTSSLPMPAKSQSQ. S1157 and S1218 each carry phosphoserine. A compositionally biased stretch (basic and acidic residues) spans 1222–1234; the sequence is AEGEAVRSQEEKS. Positions 1275–1285 are enriched in polar residues; it reads QPNTSPGPTQE. Residues 1360-1370 show a composition bias toward basic and acidic residues; the sequence is GRKDSEDDHTR. 2 positions are modified to phosphoserine: S1373 and S1375. A Phosphothreonine modification is found at T1379. Polar residues predominate over residues 1392-1409; sequence QVGSIQRSIKKSTTSSDN. Over residues 1434 to 1447 the composition is skewed to basic and acidic residues; the sequence is KSTDPRFQRSRSEP. Low complexity-rich tracts occupy residues 1448 to 1460 and 1484 to 1503; these read SADSPDSPSSCSP and SGPRYSRSRTPPSAASSRYS. Over residues 1576-1587 the composition is skewed to polar residues; that stretch reads PSEQCGGTEQKS.

This sequence belongs to the NHS family.

In Mus musculus (Mouse), this protein is NHS-like protein 1 (Nhsl1).